A 126-amino-acid polypeptide reads, in one-letter code: MHTQRAGLSAIVATYRYQLATGVVYRDISSTIATEKIPFVENAVLKERAFIETIKQHQEPQRRIPRPVDSYVMLHSNARITTSRVIPQHKYKVTAKNPCRSIKRNAFQTAPSQTQLFISVNNRWLG.

This is an uncharacterized protein from Homo sapiens (Human).